A 192-amino-acid chain; its full sequence is E3 ubiquitin-protein ligase RNF185 (192 aa).

The segment covering 1–27 (MASKGPSASASPENSSAGGPSGSSNGA) has biased composition (low complexity). The disordered stretch occupies residues 1–30 (MASKGPSASASPENSSAGGPSGSSNGAGES). Residues 1-130 (MASKGPSASA…GGFQGFGFGD (130 aa)) lie on the Cytoplasmic side of the membrane. Residues 29 to 80 (ESGGQDSTFECNICLDTAKDAVISLCGHLFCWPCLHQWLETRPNRQVCPVCK) form a required for ubiquitin ligase activity and protection against ER stress-induced cell death region. An RING-type zinc finger spans residues 39–80 (CNICLDTAKDAVISLCGHLFCWPCLHQWLETRPNRQVCPVCK). Residues 90–123 (PLYGRGSTGQQDPREKTPPRPQGQRPEPENRGGF) form a disordered region. The chain crosses the membrane as a helical span at residues 131-151 (GGFQMSFGIGAFPFGIFATAF). Topologically, residues 152–171 (NINDGRPPPAVPGTPQYVDE) are mitochondrial intermembrane. Residues 172-192 (QFLSRLFLFVALVIMFWLLIA) form a helical membrane-spanning segment.

In terms of assembly, interacts with ATG5 and BNIP1. In terms of tissue distribution, ubiquitously expressed.

It localises to the mitochondrion outer membrane. The protein localises to the endoplasmic reticulum membrane. The catalysed reaction is S-ubiquitinyl-[E2 ubiquitin-conjugating enzyme]-L-cysteine + [acceptor protein]-L-lysine = [E2 ubiquitin-conjugating enzyme]-L-cysteine + N(6)-ubiquitinyl-[acceptor protein]-L-lysine.. It participates in protein modification; protein ubiquitination. E3 ubiquitin-protein ligase that regulates selective mitochondrial autophagy by mediating 'Lys-63'-linked polyubiquitination of BNIP1. Acts in the endoplasmic reticulum (ER)-associated degradation (ERAD) pathway, which targets misfolded proteins that accumulate in the endoplasmic reticulum (ER) for ubiquitination and subsequent proteasome-mediated degradation. Protects cells from ER stress-induced apoptosis. Responsible for the cotranslational ubiquitination and degradation of CFTR in the ERAD pathway. Also acts as a regulator of the innate antiviral response by catalyzing 'Lys-27'-linked polyubiquitination of CGAS at 'Lys-173' and 'Lys-384', thereby promoting CGAS cyclic GMP-AMP synthase activity. Preferentially associates with the E2 enzymes UBE2J1 and UBE2J2. This Homo sapiens (Human) protein is E3 ubiquitin-protein ligase RNF185.